Reading from the N-terminus, the 109-residue chain is Large ribosomal subunit protein P1A (109 aa).

Residues 69–84 (APVAGGAAAPAAADGE) show a composition bias toward low complexity. Positions 69-109 (APVAGGAAAPAAADGEAPAEEKEEAKEEEESDEDMGFGLFD) are disordered. Residues 94 to 103 (KEEEESDEDM) are compositionally biased toward acidic residues.

The protein belongs to the eukaryotic ribosomal protein P1/P2 family. As to quaternary structure, component of the large ribosomal subunit (LSU). Mature yeast ribosomes consist of a small (40S) and a large (60S) subunit. The 40S small subunit contains 1 molecule of ribosomal RNA (18S rRNA) and at least 33 different proteins. The large 60S subunit contains 3 rRNA molecules (25S, 5.8S and 5S rRNA) and at least 46 different proteins. The acidic ribosomal P-proteins form the stalk structure of the 60S subunit. They are organized as a pentameric complex in which uL10/P0 interacts with 2 heterodimers of P1 and P2 proteins.

It localises to the cytoplasm. Component of the ribosome, a large ribonucleoprotein complex responsible for the synthesis of proteins in the cell. The small ribosomal subunit (SSU) binds messenger RNAs (mRNAs) and translates the encoded message by selecting cognate aminoacyl-transfer RNA (tRNA) molecules. The large subunit (LSU) contains the ribosomal catalytic site termed the peptidyl transferase center (PTC), which catalyzes the formation of peptide bonds, thereby polymerizing the amino acids delivered by tRNAs into a polypeptide chain. The nascent polypeptides leave the ribosome through a tunnel in the LSU and interact with protein factors that function in enzymatic processing, targeting, and the membrane insertion of nascent chains at the exit of the ribosomal tunnel. The chain is Large ribosomal subunit protein P1A (rpp101) from Schizosaccharomyces pombe (strain 972 / ATCC 24843) (Fission yeast).